We begin with the raw amino-acid sequence, 651 residues long: Protein SCARECROW 1 (651 aa).

2 disordered regions span residues 1 to 33 and 188 to 277; these read MGSSSLLLFPSSSSSATHSSYSPSSSSHAITSL and SDPA…KQRD. Residues 190 to 228 are compositionally biased toward pro residues; it reads PAPPPPPPPSHPALLPPDATAPPPPPTSVAALPPPPPPQ. A coiled-coil region spans residues 253-280; that stretch reads TAEETAAAAAAAKERKEEQRRKQRDEEG. Over residues 254-263 the composition is skewed to low complexity; it reads AEETAAAAAA. Basic and acidic residues predominate over residues 264–277; it reads AKERKEEQRRKQRD. In terms of domain architecture, GRAS spans 274 to 644; that stretch reads KQRDEEGLHL…LCLLTASAWR (371 aa). The tract at residues 281-345 is leucine repeat I (LRI); that stretch reads LHLLTLLLQC…VSSCLGLYAP (65 aa). The LxCxE motif motif lies at 288–292; it reads LQCAE. Residues 364-429 are VHIID; that stretch reads FQVFNGISPF…GGPPRVRLTG (66 aa). Residues 395 to 399 carry the VHIID motif; sequence VHIID. Residues 439 to 471 form a leucine repeat II (LRII) region; that stretch reads ATGKRLSDFADTLGLPFEFCPVADKAGNLDPEK. Residues 480–567 form a PFYRE region; that stretch reads VAVHWLRHSL…QQLLSREIRN (88 aa). Positions 570–644 are SAW; the sequence is AVGGPARTGD…LCLLTASAWR (75 aa).

This sequence belongs to the GRAS family. In terms of assembly, interacts with SHR1, but not with SHR2. In terms of tissue distribution, expressed in the initial daughter cell before its asymmetric division and remains expressed in the endodermal cell layer after the division.

The protein resides in the nucleus. Transcription factor required for quiescent center cells specification and maintenance of surrounding stem cells, and for the asymmetric cell division involved in radial pattern formation in roots. Essential for cell division but not differentiation of the ground tissue. Regulates the radial organization of the shoot axial organs. Restricts SHR movment and sequesters it into the nucleus of the endodermis. This Oryza sativa subsp. japonica (Rice) protein is Protein SCARECROW 1 (SCR1).